A 219-amino-acid polypeptide reads, in one-letter code: Protein-L-isoaspartate O-methyltransferase (219 aa).

The active site involves Ser-67.

Belongs to the methyltransferase superfamily. L-isoaspartyl/D-aspartyl protein methyltransferase family.

The protein localises to the cytoplasm. The catalysed reaction is [protein]-L-isoaspartate + S-adenosyl-L-methionine = [protein]-L-isoaspartate alpha-methyl ester + S-adenosyl-L-homocysteine. Catalyzes the methyl esterification of L-isoaspartyl residues in peptides and proteins that result from spontaneous decomposition of normal L-aspartyl and L-asparaginyl residues. It plays a role in the repair and/or degradation of damaged proteins. In Cereibacter sphaeroides (strain ATCC 17029 / ATH 2.4.9) (Rhodobacter sphaeroides), this protein is Protein-L-isoaspartate O-methyltransferase.